Here is a 368-residue protein sequence, read N- to C-terminus: L-cysteine desulfhydrase Cds1 (368 aa).

Position 67 is an N6-(pyridoxal phosphate)lysine (Lys-67). Residues 203 to 207 (GTGGT) and Ser-299 each bind pyridoxal 5'-phosphate.

This sequence belongs to the cysteine synthase/cystathionine beta-synthase family. Cds1 subfamily. It depends on pyridoxal 5'-phosphate as a cofactor.

It localises to the cytoplasm. It carries out the reaction L-cysteine + H2O = hydrogen sulfide + pyruvate + NH4(+) + H(+). A cysteine desulfhydrase that generates hydrogen sulfide, H(2)S. The H(2)S produced by this enzyme stimulates respiration in M.tuberculosis, mediated primarily via cytochrome bd with a lesser contribution from cytochrome bc1/aa3. H(2)S modulates the balance between respiration and glycolysis, and also contributes to redox homeostasis. Probably eliminates toxic levels of Cys (which can induce oxidative stress). The polypeptide is L-cysteine desulfhydrase Cds1 (Mycobacterium tuberculosis (strain ATCC 25177 / H37Ra)).